The following is a 199-amino-acid chain: Elongation factor Ts (199 aa).

The interval Thr-82–Val-85 is involved in Mg(2+) ion dislocation from EF-Tu.

The protein belongs to the EF-Ts family.

Its subcellular location is the cytoplasm. Associates with the EF-Tu.GDP complex and induces the exchange of GDP to GTP. It remains bound to the aminoacyl-tRNA.EF-Tu.GTP complex up to the GTP hydrolysis stage on the ribosome. This Leptospira borgpetersenii serovar Hardjo-bovis (strain JB197) protein is Elongation factor Ts.